Reading from the N-terminus, the 1404-residue chain is Proteoglycan 4 (1404 aa).

The first 24 residues, 1–24, serve as a signal peptide directing secretion; that stretch reads MAWKTLPIYLLLLLSVFVIQQVSS. SMB domains follow at residues 26 to 69 and 66 to 108; these read DLSS…AELS and AELS…AEVH. Intrachain disulfides connect cysteine 30/cysteine 34, cysteine 30/cysteine 46, cysteine 34/cysteine 64, cysteine 44/cysteine 46, cysteine 44/cysteine 57, cysteine 50/cysteine 56, cysteine 57/cysteine 64, cysteine 70/cysteine 74, cysteine 70/cysteine 86, cysteine 74/cysteine 104, cysteine 84/cysteine 86, cysteine 84/cysteine 97, cysteine 90/cysteine 96, and cysteine 97/cysteine 104. The interval 111–966 is disordered; that stretch reads TSPPSSKKAP…TTQVTSTTTQ (856 aa). O-linked (GalNAc...) serine glycans are attached at residues serine 123 and serine 136. A compositionally biased stretch (basic residues) spans 132-146; it reads TTKRSPKPPNKKKTK. The span at 166 to 177 shows a compositional bias: low complexity; the sequence is SSSSSSSSSSSS. The span at 193-205 shows a compositional bias: basic and acidic residues; sequence ELQKKLKVKDNKK. Asparagine 206 carries N-linked (GlcNAc...) asparagine glycosylation. A compositionally biased stretch (polar residues) spans 235-252; the sequence is TPDTSTTQHNKVSTSPKI. O-linked (GalNAc...) threonine glycans are attached at residues threonine 240 and threonine 253. Residues 266 to 276 show a composition bias toward polar residues; it reads PNSDTSKETSL. Threonine 277, threonine 291, and threonine 305 each carry an O-linked (GalNAc...) threonine glycan. Serine 306 carries an O-linked (GalNAc...) serine glycan. A glycan (O-linked (GalNAc...) threonine) is linked at threonine 310. Serine 317 carries an O-linked (GalNAc...) serine glycan. O-linked (GalNAc...) threonine glycans are attached at residues threonine 324, threonine 332, and threonine 338. Composition is skewed to low complexity over residues 329-348 and 356-405; these read AKPT…TTPK and KEPA…KEPA. Copy 1 of the repeat occupies 348-355; the sequence is KEPTPTTP. The tract at residues 348-855 is 59 X 8 AA repeats of K-X-P-X-P-T-T-X; it reads KEPTPTTPKE…TPETPPPTTS (508 aa). The 2; approximate repeat unit spans residues 356 to 363; sequence KEPASTTP. The stretch at 364 to 371 is repeat 3; the sequence is KEPTPTTI. O-linked (GalNAc...) threonine glycosylation occurs at threonine 367. Residues 372–378 form a 4; approximate repeat; the sequence is KSAPTTP. An O-linked (GalNAc...) serine glycan is attached at serine 373. Threonine 376, threonine 384, and threonine 385 each carry an O-linked (GalNAc...) threonine glycan. The stretch at 379–386 is repeat 5; it reads KEPAPTTT. One copy of the 6; approximate repeat lies at 387–393; the sequence is KSAPTTP. An O-linked (GalNAc...) serine glycan is attached at serine 388. Residues threonine 391, threonine 399, threonine 400, threonine 407, threonine 408, threonine 415, and threonine 423 are each glycosylated (O-linked (GalNAc...) threonine). Repeat copies occupy residues 394–401, 402–409, 410–417, and 418–425. The span at 413 to 431 shows a compositional bias: low complexity; it reads APTTTKEPAPTTTKSAPTT. The 11; approximate repeat unit spans residues 426 to 432; that stretch reads KSAPTTP. O-linked (GalNAc...) serine glycosylation occurs at serine 427. 7 O-linked (GalNAc...) threonine glycosylation sites follow: threonine 430, threonine 438, threonine 439, threonine 446, threonine 447, threonine 454, and threonine 455. Composition is skewed to pro residues over residues 432 to 467 and 476 to 506; these read PKEP…PKEP and PTTP…PKEP. 4 consecutive repeat copies span residues 433-440, 441-448, 449-456, and 457-464. The stretch at 465-471 is one 16; approximate repeat; it reads KEPAPTT. Repeat unit 17 spans residues 472–479; it reads KEPAPTTP. O-linked (GalNAc...) threonine glycans are attached at residues threonine 477, threonine 478, threonine 485, threonine 493, threonine 494, threonine 501, threonine 502, and threonine 509. The stretch at 480 to 487 is one 18; approximate repeat; it reads KEPAPTAP. The stretch at 488 to 495 is one 19; approximate repeat; the sequence is KKPAPTTP. A run of 4 repeats spans residues 496–503, 504–511, 512–519, and 520–527. A compositionally biased stretch (low complexity) spans 523–561; sequence APTTTKSAPTTTKEPAPTTTKSAPTTPKEPSPTTTKEPA. A glycan (O-linked (GalNAc...) threonine) is linked at threonine 525. The 24; approximate repeat unit spans residues 528-534; that stretch reads KSAPTTT. An O-linked (GalNAc...) serine glycan is attached at serine 529. O-linked (GalNAc...) threonine glycosylation is found at threonine 532, threonine 540, and threonine 541. The stretch at 535-542 is repeat 25; the sequence is KEPAPTTT. One copy of the 26; approximate repeat lies at 543–549; that stretch reads KSAPTTP. 6 tandem repeats follow at residues 550–557, 558–565, 566–573, 574–581, 582–589, and 590–597. Serine 553 carries an O-linked (GalNAc...) serine glycan. 17 O-linked (GalNAc...) threonine glycosylation sites follow: threonine 555, threonine 563, threonine 564, threonine 571, threonine 572, threonine 579, threonine 580, threonine 587, threonine 588, threonine 595, threonine 603, threonine 604, threonine 611, threonine 612, threonine 616, threonine 619, and threonine 627. A compositionally biased stretch (pro residues) spans 562–592; it reads PTTPKEPAPTTPKKPAPTTPKEPAPTTPKEP. The stretch at 598 to 605 is one 33; approximate repeat; it reads KKPAPTTP. Residues 602 to 611 are compositionally biased toward pro residues; sequence PTTPKEPAPT. Repeat 34 spans residues 606-613; sequence KEPAPTTP. Residues 612–636 are compositionally biased toward low complexity; the sequence is TPKETAPTTPKKLTPTTPEKLAPTT. The stretch at 614–621 is one 35; approximate repeat; it reads KETAPTTP. A 36; approximate repeat occupies 622-629; that stretch reads KKLTPTTP. One copy of the 37; approximate repeat lies at 638 to 645; it reads EKPAPTTP. The span at 653 to 667 shows a compositional bias: pro residues; the sequence is PEEPTPTTPEEPAPT. One copy of the 38; approximate repeat lies at 662-669; it reads EEPAPTTP. O-linked (GalNAc...) threonine glycans are attached at residues threonine 676, threonine 683, threonine 684, threonine 691, threonine 692, threonine 699, threonine 700, threonine 704, and threonine 707. The segment covering 677–699 has biased composition (pro residues); the sequence is PKEPAPTTPKEPAPTTPKEPAPT. Tandem repeats lie at residues 678-685, 686-693, and 694-701. Low complexity predominate over residues 700-721; the sequence is TPKETAPTTPKGTAPTTLKEPA. The stretch at 702–709 is one 42; approximate repeat; that stretch reads KETAPTTP. The 43; approximate repeat unit spans residues 710 to 717; the sequence is KGTAPTTL. The stretch at 718 to 725 is repeat 44; the sequence is KEPAPTTP. 3 O-linked (GalNAc...) threonine glycosylation sites follow: threonine 723, threonine 724, and threonine 736. Residues 728–761 are compositionally biased toward low complexity; the sequence is PAPKELAPTTTKEPTSTTSDKPAPTTPKGTAPTT. The stretch at 731 to 738 is one 45; approximate repeat; sequence KELAPTTT. The stretch at 739–746 is one 46; approximate repeat; sequence KEPTSTTS. One copy of the 47; approximate repeat lies at 747 to 754; it reads DKPAPTTP. Residues 755 to 762 form a 48; approximate repeat; sequence KGTAPTTP. Positions 762 to 776 are enriched in pro residues; it reads PKEPAPTTPKEPAPT. Repeat copies occupy residues 763 to 770 and 771 to 778. 4 O-linked (GalNAc...) threonine glycosylation sites follow: threonine 768, threonine 769, threonine 776, and threonine 777. The segment covering 777-790 has biased composition (low complexity); the sequence is TPKGTAPTTLKEPA. The stretch at 779 to 786 is one 51; approximate repeat; sequence KGTAPTTL. Repeat 52 spans residues 787-794; sequence KEPAPTTP. O-linked (GalNAc...) threonine glycans are attached at residues threonine 792, threonine 793, and threonine 805. Low complexity predominate over residues 797–830; that stretch reads PAPKELAPTTTKGPTSTTSDKPAPTTPKETAPTT. The 53; approximate repeat unit spans residues 800 to 807; that stretch reads KELAPTTT. A 54; approximate repeat occupies 808–815; it reads KGPTSTTS. Serine 812 is a glycosylation site (O-linked (GalNAc...) serine). One copy of the 55; approximate repeat lies at 816-823; it reads DKPAPTTP. Residues 824–831 form a 56; approximate repeat; sequence KETAPTTP. O-linked (GalNAc...) threonine glycans are attached at residues threonine 829, threonine 837, and threonine 838. A compositionally biased stretch (pro residues) spans 831–853; the sequence is PKEPAPTTPKKPAPTTPETPPPT. A run of 2 repeats spans residues 832-839 and 840-847. Residues 848 to 855 form a 59; approximate repeat; sequence ETPPPTTS. Low complexity predominate over residues 854 to 866; the sequence is TSEVSTPTTTKEP. O-linked (GalNAc...) serine glycosylation occurs at serine 892. Low complexity predominate over residues 899–914; it reads PTTKTPAATKPEMTTT. Threonine 900 is a glycosylation site (O-linked (GalNAc...) threonine). Positions 915–926 are enriched in basic and acidic residues; that stretch reads AKDKTTERDLRT. Over residues 927 to 966 the composition is skewed to low complexity; sequence TPETTTAAPKMTKETATTTEKTTESKITATTTQVTSTTTQ. 2 O-linked (GalNAc...) threonine glycosylation sites follow: threonine 930 and threonine 931. Residue serine 962 is glycosylated (O-linked (GalNAc...) serine). Residues threonine 963, threonine 968, threonine 975, threonine 978, threonine 979, and threonine 980 are each glycosylated (O-linked (GalNAc...) threonine). The tract at residues 992–1104 is disordered; sequence ITTTEIMNKP…EDAGGAEGET (113 aa). The segment covering 999–1012 has biased composition (basic and acidic residues); that stretch reads NKPEETAKPKDRAT. Residues 1026-1047 show a composition bias toward basic residues; the sequence is KAPKKPTSTKKPKTMPRVRKPK. Threonine 1039 carries an O-linked (GalNAc...) threonine glycan. Positions 1048-1060 are enriched in low complexity; that stretch reads TTPTPRKMTSTMP. Residues 1073–1085 show a composition bias toward polar residues; sequence LQTTTRPNQTPNS. The cysteines at positions 1146 and 1403 are disulfide-linked. Hemopexin repeat units follow at residues 1148 to 1191 and 1192 to 1239; these read GKPV…VWGI and PSPI…FGGL. An N-linked (GlcNAc...) asparagine glycan is attached at asparagine 1159. Threonine 1161 carries O-linked (GalNAc...) threonine glycosylation.

In terms of assembly, homodimer; disulfide-linked. N-glycosylated. Post-translationally, O-glycosylated; contains glycosaminoglycan chondroitin sulfate and keratan sulfate. O-glycosylated with sialylated oligosaccharides which are predominantly represented by the monosialylated core type I structure, NeuNAcalpha2-3Galbeta1-3GalNAc, with smaller amounts of disialylated O-glycans. In terms of processing, the disulfide bond between Cys-1146 and Cys-1403 is essential for protein cleavage. Proteolytically cleaved by cathepsin CTSG. As to expression, highly expressed in synovial tissue, cartilage and liver and weakly in heart and lung. Isoform B is expressed in kidney, lung, liver, heart and brain. Isoform C and isoform D are widely expressed.

It localises to the secreted. Plays a role in boundary lubrication within articulating joints. Prevents protein deposition onto cartilage from synovial fluid by controlling adhesion-dependent synovial growth and inhibiting the adhesion of synovial cells to the cartilage surface. Functionally, isoform F plays a role as a growth factor acting on the primitive cells of both hematopoietic and endothelial cell lineages. The protein is Proteoglycan 4 (PRG4) of Homo sapiens (Human).